A 78-amino-acid polypeptide reads, in one-letter code: Large ribosomal subunit protein bL28 (78 aa).

It belongs to the bacterial ribosomal protein bL28 family.

In Bordetella avium (strain 197N), this protein is Large ribosomal subunit protein bL28.